A 210-amino-acid polypeptide reads, in one-letter code: dTTP/UTP pyrophosphatase (210 aa).

The active-site Proton acceptor is the D80.

This sequence belongs to the Maf family. YhdE subfamily. A divalent metal cation is required as a cofactor.

Its subcellular location is the cytoplasm. The catalysed reaction is dTTP + H2O = dTMP + diphosphate + H(+). It carries out the reaction UTP + H2O = UMP + diphosphate + H(+). Nucleoside triphosphate pyrophosphatase that hydrolyzes dTTP and UTP. May have a dual role in cell division arrest and in preventing the incorporation of modified nucleotides into cellular nucleic acids. The polypeptide is dTTP/UTP pyrophosphatase (Nitratidesulfovibrio vulgaris (strain ATCC 29579 / DSM 644 / CCUG 34227 / NCIMB 8303 / VKM B-1760 / Hildenborough) (Desulfovibrio vulgaris)).